A 446-amino-acid polypeptide reads, in one-letter code: Thymidine phosphorylase (446 aa).

Belongs to the thymidine/pyrimidine-nucleoside phosphorylase family. Homodimer.

The catalysed reaction is thymidine + phosphate = 2-deoxy-alpha-D-ribose 1-phosphate + thymine. It functions in the pathway pyrimidine metabolism; dTMP biosynthesis via salvage pathway; dTMP from thymine: step 1/2. Its function is as follows. The enzymes which catalyze the reversible phosphorolysis of pyrimidine nucleosides are involved in the degradation of these compounds and in their utilization as carbon and energy sources, or in the rescue of pyrimidine bases for nucleotide synthesis. In Psychromonas ingrahamii (strain DSM 17664 / CCUG 51855 / 37), this protein is Thymidine phosphorylase.